The primary structure comprises 332 residues: Arrestin domain-containing protein 5 (332 aa).

Residues 311 to 332 (SNQTAAGCRTRAPLPVSPDQQN) form a disordered region.

The protein belongs to the arrestin family.

Its subcellular location is the membrane. Plays an essential role in spermatogenesis. May be involved in the anchoring of the sperm head to the tail during spermatogenesis by affecting SEC22A-mediated SUN5 and NDC1 transport and localization. This chain is Arrestin domain-containing protein 5 (ARRDC5), found in Bos taurus (Bovine).